Here is a 493-residue protein sequence, read N- to C-terminus: UDP-N-acetylmuramate--L-alanine ligase (493 aa).

112–118 (GTHGKTT) contacts ATP.

This sequence belongs to the MurCDEF family.

Its subcellular location is the cytoplasm. It carries out the reaction UDP-N-acetyl-alpha-D-muramate + L-alanine + ATP = UDP-N-acetyl-alpha-D-muramoyl-L-alanine + ADP + phosphate + H(+). It participates in cell wall biogenesis; peptidoglycan biosynthesis. Functionally, cell wall formation. This chain is UDP-N-acetylmuramate--L-alanine ligase, found in Nitrosospira multiformis (strain ATCC 25196 / NCIMB 11849 / C 71).